The chain runs to 1195 residues: MSQKDIYNKYSNQSADDQQEEDDDENQESSCQLSPEKDLGESLQGEDLDEDQGVIGEDDEEQEESYDEEDEEEDDEENNQDQQNNSESNLQYDKTNQKNQQTEMTDNQNEFLAEDYLSQIKTNEKSELKYQLDIQSNLSGENVQDMDEKLKQYIELNGKNENQQAAESKKIENDEIMKKSEENVHEKVVDNNQKLNIQQNNINDYQEDIKKDQSNNLVDIQQNNEIIKEVNSEDQQQKNEMDNKQSDIVLAQEESKQSEQVEAPIVKQKKIELRPKVIYDPKNDVDQYTGDYSDSGESDEEANNEDDDEDEDDESENESRSRKNKAQLLKKKNNKKEQAKKQQVKKVYKKQTLVLNVADTKYPVVKFVGKKIFKWKLAYDMESMDFDIFWTDNAVQPEQLGRMQPYQKINHFPGMFSLARKNHLARNLMKMRKQFPDQYKFFPQTWLLPAEYNDFKNQFEKSRSQQKIFIVKPEASCQGRGIFLTRSLDDLNPSDHYVVQRYLNKPYLIDGLKFDFRLYVLLAGCDPLRIYLYYEGLTRFATEKYQEVNRDNIEDMCMHLTNYAINKDNPNFKFNKDKEKMDVGHKRSLTSVLQLLEDQGHDVNKLWKDIKRVLIKTIISAQPTLAHHYKSCQPDNFMNNMCFEILGFDIILDSHLKPWVLEVNHTPSFSTDTPLDSYIKKNTIRDSLKLMNCTCKAKNEIINQRKEIMQKRVLTGKKVKYTPEEKLEEIKKAQQKRDEYEDKHLGGFERIFPMEDDEDDNFTEYMQYALKCYEEQTGANIRRNTKKVTEDPKKITNQPKKLNQPKDLEKIYNTKIGAKLPPRKPNSQTTINKGIPGQNGQRPSSSQLNEEGETIQCEDQEQNKDEAIENAITRSASGRMHDFRIKKQNSPYNIHQKFKNKIQNRVAIGVKELKLAEEPFQFEENINGKPSNPNVKKIQAYITSEKEQLEIKNMNILQDQNYNSSRAVQAKKPQIEPQVLFVQEPQTKKLQILNQAKPPQQKLQFQLIDNTAAQMEEERRQWLIQAQRNLQYQLSQQQYQPQQKLTLLPKGPPIHPQTNVMQSIADIPNSSNSKEILAAVGGAISGQYKTDKRVTIKQKGQIQNQSINQLKDNNGLFLQPKLFEIQSFQSSQQQQAQQAIQSSLDQNLIGINQNMVGLNDLFVSGKSHKVQPHYQAQQDSYSYQKHNSYSNYYQK.

A disordered region spans residues 1 to 110 (MSQKDIYNKY…QTEMTDNQNE (110 aa)). Acidic residues-rich tracts occupy residues 17–27 (DQQEEDDDENQ) and 44–79 (QGEDLDEDQGVIGEDDEEQEESYDEEDEEEDDEENN). 2 coiled-coil regions span residues 59 to 103 (DEEQ…QQTE) and 144 to 260 (QDMD…QSEQ). Over residues 80–89 (QDQQNNSESN) the composition is skewed to low complexity. Positions 90–110 (LQYDKTNQKNQQTEMTDNQNE) are enriched in polar residues. The tract at residues 281 to 343 (PKNDVDQYTG…NKKEQAKKQQ (63 aa)) is disordered. Residues 294–316 (DSGESDEEANNEDDDEDEDDESE) are compositionally biased toward acidic residues. Basic residues predominate over residues 322-334 (RKNKAQLLKKKNN). A TTL domain is found at 350 to 703 (KQTLVLNVAD…TCKAKNEIIN (354 aa)). ATP-binding positions include 500–503 (QRYL), Lys-513, and Asp-515. The segment at 674–756 (PLDSYIKKNT…GFERIFPMED (83 aa)) is c-MTBD region. The interval 783-862 (RNTKKVTEDP…ETIQCEDQEQ (80 aa)) is disordered. Residues 825–849 (PNSQTTINKGIPGQNGQRPSSSQLN) show a composition bias toward polar residues. The segment covering 850–860 (EEGETIQCEDQ) has biased composition (acidic residues).

It is found in the cytoplasm. The protein resides in the cytoskeleton. It localises to the cell projection. Its subcellular location is the cilium. The protein localises to the cilium basal body. Functionally, probable tubulin polyglutamylase with a strong preference for beta-tubulin. This Tetrahymena thermophila (strain SB210) protein is Probable beta-tubulin polyglutamylase (Ttll6a).